Reading from the N-terminus, the 428-residue chain is MTAKWEKQEGNKGVLTFEVSAEEFEQALDQAFKKVSKDVQIPGFRKGKIPRGIFEKRFGVEALYQDAVDIVLPSAYTKAVEEADIFPIAQPSVDIDQIERGKELIFTAEVEVKPEVKLGEYKGLEVEEESVEVTDEDVEKEIENVRERHAELIVKEEEAIENGDTAVIDFEGFQDGVAFEGGKGENHSLEIGSGQFIPGFEEQLIGKKAGEETEVTVTFPEEYHAEDLAGKEAVFNVKINEVKAKELPELDDEFAKDVDEEVESLDELKKKKRNELETNKKQEVENKKREELIQKASDNVEVDIPEAMVDTEVNQMVREFEQQLQMQGMTLEMYAQFSGQDEDALKEQMREDAAKRVKTNLTLEAISEAEGIKPSEEDIKAELEKMASMYGAEVDQLVQMLGGNTETLENDLKVKAAIDFLAENSKTK.

A PPIase FKBP-type domain is found at 163–248 (GDTAVIDFEG…INEVKAKELP (86 aa)).

Belongs to the FKBP-type PPIase family. Tig subfamily.

The protein localises to the cytoplasm. The catalysed reaction is [protein]-peptidylproline (omega=180) = [protein]-peptidylproline (omega=0). Functionally, involved in protein export. Acts as a chaperone by maintaining the newly synthesized protein in an open conformation. Functions as a peptidyl-prolyl cis-trans isomerase. The protein is Trigger factor of Oceanobacillus iheyensis (strain DSM 14371 / CIP 107618 / JCM 11309 / KCTC 3954 / HTE831).